Reading from the N-terminus, the 819-residue chain is Ferric-pyoverdine 358 receptor (819 aa).

Positions M1 to A47 are cleaved as a signal peptide. Residues N115–S122 carry the TonB box motif. The TBDR plug domain maps to S166–K276. Positions E281–F819 constitute a TBDR beta-barrel domain. Residues Y802–F819 carry the TonB C-terminal box motif.

This sequence belongs to the TonB-dependent receptor family.

It is found in the cell outer membrane. In terms of biological role, specific receptor for the siderophore ferric pyoverdine (pseudobactin) 358. This Pseudomonas putida (Arthrobacter siderocapsulatus) protein is Ferric-pyoverdine 358 receptor (pupA).